A 273-amino-acid polypeptide reads, in one-letter code: Transposable element Tc1 transposase (273 aa).

The protein belongs to the transposase 5 family.

The protein resides in the nucleus. Its function is as follows. Probably essential for transposable element Tc1 transposition. The insertion of Tc1 is the main cause of spontaneous mutations. It is an endonuclease which can produce a single strand nick at the 5'-end of the transposon. This Caenorhabditis elegans protein is Transposable element Tc1 transposase (tc1a).